Reading from the N-terminus, the 420-residue chain is Gamma-glutamyl phosphate reductase (420 aa).

This sequence belongs to the gamma-glutamyl phosphate reductase family.

It is found in the cytoplasm. The catalysed reaction is L-glutamate 5-semialdehyde + phosphate + NADP(+) = L-glutamyl 5-phosphate + NADPH + H(+). It functions in the pathway amino-acid biosynthesis; L-proline biosynthesis; L-glutamate 5-semialdehyde from L-glutamate: step 2/2. In terms of biological role, catalyzes the NADPH-dependent reduction of L-glutamate 5-phosphate into L-glutamate 5-semialdehyde and phosphate. The product spontaneously undergoes cyclization to form 1-pyrroline-5-carboxylate. This Streptococcus pneumoniae (strain P1031) protein is Gamma-glutamyl phosphate reductase.